Consider the following 455-residue polypeptide: Protein FAM124B (455 aa).

Phosphoserine is present on serine 49. Residues 270–322 form a disordered region; that stretch reads TSVSAKRTSEPRSQRNQGKRSQGHSLELPEPSGSPTSDRCAGTSWKSPGRSFQ. The span at 313 to 322 shows a compositional bias: polar residues; the sequence is SWKSPGRSFQ.

It belongs to the FAM124 family. In terms of assembly, interacts with CHD7 and CHD8.

The protein resides in the nucleus. This Homo sapiens (Human) protein is Protein FAM124B (FAM124B).